The primary structure comprises 156 residues: 6,7-dimethyl-8-ribityllumazine synthase (156 aa).

Residues Phe23, 57–59 (AYE), and 81–83 (AII) each bind 5-amino-6-(D-ribitylamino)uracil. 86-87 (GT) is a binding site for (2S)-2-hydroxy-3-oxobutyl phosphate. His89 (proton donor) is an active-site residue. Phe114 contacts 5-amino-6-(D-ribitylamino)uracil. Arg128 provides a ligand contact to (2S)-2-hydroxy-3-oxobutyl phosphate.

This sequence belongs to the DMRL synthase family.

The enzyme catalyses (2S)-2-hydroxy-3-oxobutyl phosphate + 5-amino-6-(D-ribitylamino)uracil = 6,7-dimethyl-8-(1-D-ribityl)lumazine + phosphate + 2 H2O + H(+). It participates in cofactor biosynthesis; riboflavin biosynthesis; riboflavin from 2-hydroxy-3-oxobutyl phosphate and 5-amino-6-(D-ribitylamino)uracil: step 1/2. Catalyzes the formation of 6,7-dimethyl-8-ribityllumazine by condensation of 5-amino-6-(D-ribitylamino)uracil with 3,4-dihydroxy-2-butanone 4-phosphate. This is the penultimate step in the biosynthesis of riboflavin. In Helicobacter pylori (strain ATCC 700392 / 26695) (Campylobacter pylori), this protein is 6,7-dimethyl-8-ribityllumazine synthase.